The primary structure comprises 413 residues: Serine hydroxymethyltransferase (413 aa).

Residues Leu117 and Gly121–Leu123 contribute to the (6S)-5,6,7,8-tetrahydrofolate site. Lys226 carries the N6-(pyridoxal phosphate)lysine modification. (6S)-5,6,7,8-tetrahydrofolate is bound by residues Glu239 and Ser349 to Phe351.

It belongs to the SHMT family. In terms of assembly, homodimer. The cofactor is pyridoxal 5'-phosphate.

The protein localises to the cytoplasm. The enzyme catalyses (6R)-5,10-methylene-5,6,7,8-tetrahydrofolate + glycine + H2O = (6S)-5,6,7,8-tetrahydrofolate + L-serine. It participates in one-carbon metabolism; tetrahydrofolate interconversion. It functions in the pathway amino-acid biosynthesis; glycine biosynthesis; glycine from L-serine: step 1/1. Catalyzes the reversible interconversion of serine and glycine with tetrahydrofolate (THF) serving as the one-carbon carrier. This reaction serves as the major source of one-carbon groups required for the biosynthesis of purines, thymidylate, methionine, and other important biomolecules. Also exhibits THF-independent aldolase activity toward beta-hydroxyamino acids, producing glycine and aldehydes, via a retro-aldol mechanism. In Bacillus cytotoxicus (strain DSM 22905 / CIP 110041 / 391-98 / NVH 391-98), this protein is Serine hydroxymethyltransferase.